The following is a 464-amino-acid chain: MSTDKTNQSWGGRFSEPVDAFVARFTASVTFDQRLYRHDIMGSIAHATMLAKVGVLTDAERDSIIDGLKTIQGEIEAGQFDWRVDLEDVHMNIEARLTDRIGVTGKKLHTGRSRNDQVATDIRLWLRDEIDLILSEITRLQKGLLEQAEREAASIMPGFTHLQTAQPVTFGHHMLAWFEMLSRDYERLVDCRKRTNRMPLGSAALAGTTYPIDREYTAQLLGFDAVGGNSLDNVSDRDFAIEFCSAASIAMMHLSRFSEELVLWTSAQFQFIDLPDRFCTGSSIMPQKKNPDVPELVRGKTGRVFGALMGLLTLMKGQPLAYNKDNQEDKEPLFDAADTLRDSLRAFADMIPAIKPKHAIMREAALRGFSTATDLADYLVRRGLPFRDCHEIVGHAVKYGVDTGKDLAEMSLEELRQFSDQIEQDVFAVLTLEGSVNARDHIGGTAPAQVKAAVVRGQALIASR.

The protein belongs to the lyase 1 family. Argininosuccinate lyase subfamily.

The protein resides in the cytoplasm. The catalysed reaction is 2-(N(omega)-L-arginino)succinate = fumarate + L-arginine. The protein operates within amino-acid biosynthesis; L-arginine biosynthesis; L-arginine from L-ornithine and carbamoyl phosphate: step 3/3. The protein is Argininosuccinate lyase 2 of Pseudomonas fluorescens (strain Pf0-1).